We begin with the raw amino-acid sequence, 550 residues long: Chaperonin GroEL (550 aa).

Residues 30 to 33, Lys51, 87 to 91, Gly415, and Asp495 contribute to the ATP site; these read TLGP and DGTTT.

Belongs to the chaperonin (HSP60) family. As to quaternary structure, forms a cylinder of 14 subunits composed of two heptameric rings stacked back-to-back. Interacts with the co-chaperonin GroES.

The protein localises to the cytoplasm. The enzyme catalyses ATP + H2O + a folded polypeptide = ADP + phosphate + an unfolded polypeptide.. In terms of biological role, together with its co-chaperonin GroES, plays an essential role in assisting protein folding. The GroEL-GroES system forms a nano-cage that allows encapsulation of the non-native substrate proteins and provides a physical environment optimized to promote and accelerate protein folding. This chain is Chaperonin GroEL, found in Dechloromonas aromatica (strain RCB).